A 401-amino-acid polypeptide reads, in one-letter code: Argininosuccinate synthase (401 aa).

Residue 8–16 (AYSGGLDTS) participates in ATP binding. Tyr-85 is an L-citrulline binding site. Gly-115 contributes to the ATP binding site. L-aspartate contacts are provided by Thr-117, Asn-121, and Asp-122. Asn-121 contributes to the L-citrulline binding site. The L-citrulline site is built by Arg-125, Ser-173, Glu-258, and Tyr-270.

It belongs to the argininosuccinate synthase family. Type 1 subfamily. As to quaternary structure, homotetramer.

The protein resides in the cytoplasm. The catalysed reaction is L-citrulline + L-aspartate + ATP = 2-(N(omega)-L-arginino)succinate + AMP + diphosphate + H(+). Its pathway is amino-acid biosynthesis; L-arginine biosynthesis; L-arginine from L-ornithine and carbamoyl phosphate: step 2/3. This chain is Argininosuccinate synthase, found in Staphylococcus aureus (strain MSSA476).